Reading from the N-terminus, the 475-residue chain is Pyruvate kinase (475 aa).

Arginine 33 lines the substrate pocket. K(+) contacts are provided by asparagine 35, serine 37, and aspartate 67. Residue 35 to 38 (NFSH) participates in ATP binding. 2 residues coordinate ATP: arginine 74 and lysine 155. Residue glutamate 220 coordinates Mg(2+). Residues glycine 243, aspartate 244, and threonine 276 each coordinate substrate. Aspartate 244 is a binding site for Mg(2+).

Belongs to the pyruvate kinase family. Homotetramer. Mg(2+) serves as cofactor. The cofactor is K(+).

It catalyses the reaction pyruvate + ATP = phosphoenolpyruvate + ADP + H(+). It participates in carbohydrate degradation; glycolysis; pyruvate from D-glyceraldehyde 3-phosphate: step 5/5. The chain is Pyruvate kinase (pyk) from Corynebacterium glutamicum (strain ATCC 13032 / DSM 20300 / JCM 1318 / BCRC 11384 / CCUG 27702 / LMG 3730 / NBRC 12168 / NCIMB 10025 / NRRL B-2784 / 534).